Reading from the N-terminus, the 578-residue chain is MKASRFFIGTLKEAPADAEIVSHKLMVRAGMIRRVAGGIYNYLPVGLRSIRKVEAIVREEMNRAGGIELLMPAVQPAELWQESGRWEQYGPELLRFKDRKDNDFVIGPTHEEVITDIARNQIKSYRQMPVNFYQIQTKFRDEIRPRFGVMRGREFIMKDAYSFDKDAAGLNESYRKMYDAYVRIFTRLGLEFRAVAADSGSIGGNFSHEFHVIADTGEDAIAYCPTSEFAANIEAAEALPLIAERAAPAEAMEKVATPGKAKCEAVAELLAIPLERTIKSIVLATDNEGAEPTIWLVMLRGDHDLNEIKVSKLPGLKNHRFATEQEIVEWFGTPPGYLGPVGTKKPVKVIADRTVANMSDFVVGANEVDYHIAGVNWGRDLPEPDVADVRNVKKGDPSPDGKGVIDICRGIEVGHVFQLGTKYSEAMGATFLDESGKPQPMLMGCYGVGVTRILGAAIEQNFDDKGIIWPESIAPFEVVLCPMGYDRSDMVRETADKLYAELVAAGIDVILDDRGERPGVMFADWELIGVPHRLVIGERGLKEGKIEYQGRRDAEATLLPADAAAATVAEKIRAALAR.

It belongs to the class-II aminoacyl-tRNA synthetase family. ProS type 1 subfamily. Homodimer.

It is found in the cytoplasm. It catalyses the reaction tRNA(Pro) + L-proline + ATP = L-prolyl-tRNA(Pro) + AMP + diphosphate. Functionally, catalyzes the attachment of proline to tRNA(Pro) in a two-step reaction: proline is first activated by ATP to form Pro-AMP and then transferred to the acceptor end of tRNA(Pro). As ProRS can inadvertently accommodate and process non-cognate amino acids such as alanine and cysteine, to avoid such errors it has two additional distinct editing activities against alanine. One activity is designated as 'pretransfer' editing and involves the tRNA(Pro)-independent hydrolysis of activated Ala-AMP. The other activity is designated 'posttransfer' editing and involves deacylation of mischarged Ala-tRNA(Pro). The misacylated Cys-tRNA(Pro) is not edited by ProRS. In Burkholderia lata (strain ATCC 17760 / DSM 23089 / LMG 22485 / NCIMB 9086 / R18194 / 383), this protein is Proline--tRNA ligase.